Reading from the N-terminus, the 256-residue chain is MAVISMKQLLEAGVHFGHQTRRWNPKMAKYIFTERNGIHVIDLQQTVKLADQAYEFVRDAAANDAVILFVGTKKQAAEAVAEEAKRAGQYFINHRWLGGTLTNWGTIQKRIARLKEIKRMEEEGTFELLPKKEVALLNKQRARLEKFLGGIEDMPRIPDVMYVVDPHKEQIAVKEAKKLGIPVVAMVDTNADPDDIDVIIPANDDAIRAVKLITSKLADAVIEGRQGEDADVDFAQEAQADSIEEIVEVVEGSNND.

It belongs to the universal ribosomal protein uS2 family.

This chain is Small ribosomal subunit protein uS2, found in Streptococcus agalactiae serotype III (strain NEM316).